The sequence spans 293 residues: ATP synthase subunit a (293 aa).

6 helical membrane-spanning segments follow: residues 40–60 (DSLF…WLAA), 97–117 (LFVA…NALD), 151–171 (DLNV…YYGI), 188–208 (FHAH…LNLI), 225–245 (MFAG…WTGF), and 264–284 (AIFH…LTLV).

Belongs to the ATPase A chain family. As to quaternary structure, F-type ATPases have 2 components, CF(1) - the catalytic core - and CF(0) - the membrane proton channel. CF(1) has five subunits: alpha(3), beta(3), gamma(1), delta(1), epsilon(1). CF(0) has three main subunits: a(1), b(2) and c(9-12). The alpha and beta chains form an alternating ring which encloses part of the gamma chain. CF(1) is attached to CF(0) by a central stalk formed by the gamma and epsilon chains, while a peripheral stalk is formed by the delta and b chains.

The protein resides in the cell inner membrane. In terms of biological role, key component of the proton channel; it plays a direct role in the translocation of protons across the membrane. The chain is ATP synthase subunit a from Bordetella bronchiseptica (strain ATCC BAA-588 / NCTC 13252 / RB50) (Alcaligenes bronchisepticus).